A 90-amino-acid chain; its full sequence is Secretoglobin family 1D member 2 (90 aa).

A signal peptide spans Met1–Ala21.

Belongs to the secretoglobin family. Lipophilin subfamily. In terms of tissue distribution, highest expression was found in skeletal muscle. Expressed as well in thymus, trachea, kidney, steroid responsive tissues (prostate, testis, uterus, breast and ovary) and salivary gland.

Its subcellular location is the secreted. May bind androgens and other steroids, may also bind estramustine, a chemotherapeutic agent used for prostate cancer. May be under transcriptional regulation of steroid hormones. This is Secretoglobin family 1D member 2 (SCGB1D2) from Homo sapiens (Human).